Here is a 643-residue protein sequence, read N- to C-terminus: Phosphomethylpyrimidine synthase (643 aa).

Residues asparagine 248, methionine 277, tyrosine 306, histidine 342, 362–364, 403–406, and glutamate 442 contribute to the substrate site; these read SRG and DGLR. Histidine 446 is a binding site for Zn(2+). Position 469 (tyrosine 469) interacts with substrate. Histidine 510 provides a ligand contact to Zn(2+). Residues cysteine 590, cysteine 593, and cysteine 598 each contribute to the [4Fe-4S] cluster site.

The protein belongs to the ThiC family. As to quaternary structure, homodimer. [4Fe-4S] cluster serves as cofactor.

The enzyme catalyses 5-amino-1-(5-phospho-beta-D-ribosyl)imidazole + S-adenosyl-L-methionine = 4-amino-2-methyl-5-(phosphooxymethyl)pyrimidine + CO + 5'-deoxyadenosine + formate + L-methionine + 3 H(+). It participates in cofactor biosynthesis; thiamine diphosphate biosynthesis. In terms of biological role, catalyzes the synthesis of the hydroxymethylpyrimidine phosphate (HMP-P) moiety of thiamine from aminoimidazole ribotide (AIR) in a radical S-adenosyl-L-methionine (SAM)-dependent reaction. The polypeptide is Phosphomethylpyrimidine synthase (Paraburkholderia phytofirmans (strain DSM 17436 / LMG 22146 / PsJN) (Burkholderia phytofirmans)).